A 308-amino-acid chain; its full sequence is Elongation factor Ts (308 aa).

The tract at residues 80-83 (TDFV) is involved in Mg(2+) ion dislocation from EF-Tu.

This sequence belongs to the EF-Ts family.

The protein resides in the cytoplasm. Functionally, associates with the EF-Tu.GDP complex and induces the exchange of GDP to GTP. It remains bound to the aminoacyl-tRNA.EF-Tu.GTP complex up to the GTP hydrolysis stage on the ribosome. This chain is Elongation factor Ts, found in Agrobacterium fabrum (strain C58 / ATCC 33970) (Agrobacterium tumefaciens (strain C58)).